The following is a 530-amino-acid chain: Bifunctional purine biosynthesis protein PurH (530 aa).

Positions 1–148 (MNNARPIRRA…KNHKDVTIVV (148 aa)) constitute an MGS-like domain.

The protein belongs to the PurH family.

It catalyses the reaction (6R)-10-formyltetrahydrofolate + 5-amino-1-(5-phospho-beta-D-ribosyl)imidazole-4-carboxamide = 5-formamido-1-(5-phospho-D-ribosyl)imidazole-4-carboxamide + (6S)-5,6,7,8-tetrahydrofolate. The enzyme catalyses IMP + H2O = 5-formamido-1-(5-phospho-D-ribosyl)imidazole-4-carboxamide. The protein operates within purine metabolism; IMP biosynthesis via de novo pathway; 5-formamido-1-(5-phospho-D-ribosyl)imidazole-4-carboxamide from 5-amino-1-(5-phospho-D-ribosyl)imidazole-4-carboxamide (10-formyl THF route): step 1/1. It functions in the pathway purine metabolism; IMP biosynthesis via de novo pathway; IMP from 5-formamido-1-(5-phospho-D-ribosyl)imidazole-4-carboxamide: step 1/1. This is Bifunctional purine biosynthesis protein PurH from Vibrio atlanticus (strain LGP32) (Vibrio splendidus (strain Mel32)).